The sequence spans 475 residues: Putative aldehyde dehydrogenase (475 aa).

NAD(+) contacts are provided by residues 146–147 and 223–224; these read WN and GS. Catalysis depends on glutamate 245, which acts as the Proton acceptor. Leucine 246 is a binding site for NAD(+). The active-site Nucleophile is the cysteine 279. Glutamate 379 provides a ligand contact to NAD(+).

It belongs to the aldehyde dehydrogenase family.

The catalysed reaction is an aldehyde + NAD(+) + H2O = a carboxylate + NADH + 2 H(+). In Staphylococcus aureus (strain bovine RF122 / ET3-1), this protein is Putative aldehyde dehydrogenase.